The primary structure comprises 606 residues: Leucine-rich repeat and immunoglobulin-like domain-containing nogo receptor-interacting protein 2 (606 aa).

An N-terminal signal peptide occupies residues 1-27 (MLHTAIPCWQPFLGLAVVLLLMGSTIG). One can recognise an LRRNT domain in the interval 28 to 57 (CPARCECSAQNKSVSCHRRRLLAIPEGIPI). Residues 28-545 (CPARCECSAQ…LDLKTILVST (518 aa)) are Extracellular-facing. N38 carries N-linked (GlcNAc...) asparagine glycosylation. LRR repeat units lie at residues 58–79 (ETKILDLSKNRLKSINPEEFIS), 82–103 (LLEEIDLSDNIIANVEPGAFNN), 106–127 (NLRSLRLKGNRLKLVPLGVFTG), 130–151 (NLTKLDISENKIVILLDYMFQD), 154–175 (NLKSLEVGDNDLVYISHRAFSG), 178–199 (SLEQLTLEKCNLTAVPTEALSH), 202–223 (SLIALHLKHLNINNMPVYAFKR), 226–247 (HLKNLEIDYWPLLDLMPANSLY), 250–271 (NLTSLSITNTNLSTVPFLAFKH), 274–295 (YLTHLNLSYNPISTIEAGMFSD), 298–319 (RLQELHIVGAQLRTIEPHSFQG), and 322–343 (FLRVLNVSQNLLETLEENVFSS). N-linked (GlcNAc...) asparagine glycosylation occurs at N130. The N-linked (GlcNAc...) asparagine glycan is linked to N188. N-linked (GlcNAc...) asparagine glycans are attached at residues N250, N260, and N279. An N-linked (GlcNAc...) asparagine glycan is attached at N327. One can recognise an LRRCT domain in the interval 355 to 409 (NPLACDCRLLWLLQRQPNLQFGGQQPMCAGPDTIRERSFKDFHSTALSFYFTCKK). A disulfide bond links C432 and C483. Residues N491, N522, and N527 are each glycosylated (N-linked (GlcNAc...) asparagine). The chain crosses the membrane as a helical span at residues 546 to 566 (AMGCFTFLGVVLFCFLLLFVW). The Cytoplasmic segment spans residues 567–606 (SRGKGKHKNSIDLEYVPRKNNGAVVEGEVAGPRRFNMKMI).

The protein resides in the membrane. The protein is Leucine-rich repeat and immunoglobulin-like domain-containing nogo receptor-interacting protein 2 (Lingo2) of Mus musculus (Mouse).